The sequence spans 151 residues: MNPLRRKRLLIILAILVGVGIAVGLALSALQQNINLFYTPTQIANGEAPIDTRIRAGGMVEKGSLKRSGDSLDVTFVVTDFNKAVTITYRGILPDLFREGQGIVALGKLNADGVVVADEVLAKHDEKYMPPEVTKALKDSGQSAPTPAKEG.

At 1–8 (MNPLRRKR) the chain is on the cytoplasmic side. The chain crosses the membrane as a helical; Signal-anchor for type II membrane protein span at residues 9-29 (LLIILAILVGVGIAVGLALSA). Residues 30–151 (LQQNINLFYT…QSAPTPAKEG (122 aa)) are Periplasmic-facing. 2 residues coordinate heme: histidine 124 and tyrosine 128.

It belongs to the CcmE/CycJ family.

The protein localises to the cell inner membrane. Its function is as follows. Heme chaperone required for the biogenesis of c-type cytochromes. Transiently binds heme delivered by CcmC and transfers the heme to apo-cytochromes in a process facilitated by CcmF and CcmH. This chain is Cytochrome c-type biogenesis protein CcmE, found in Pseudomonas fluorescens (strain SBW25).